Consider the following 153-residue polypeptide: Cofilin (153 aa).

Residues 4–148 form the ADF-H domain; it reads SGATVSQDCI…EYDSILKTVS (145 aa).

Belongs to the actin-binding proteins ADF family.

The protein resides in the cytoplasm. It localises to the cytoskeleton. It is found in the nucleus matrix. Functionally, controls reversibly actin polymerization and depolymerization in a pH-sensitive manner. It has the ability to bind G- and F-actin in a 1:1 ratio of cofilin to actin. Binding to F-actin is regulated by tropomyosin. It is the major component of intranuclear and cytoplasmic actin rods. Required for accumulation of actin at the cell division site via depolymerizing actin at the cell ends. In association with myosin II has a role in the assembly of the contractile ring via severing actin filaments. Involved in the maintenance of the contractile ring once formed. In association with profilin and capping protein, has a role in the mitotic reorganization of the actin cytoskeleton. This Gibberella zeae (strain ATCC MYA-4620 / CBS 123657 / FGSC 9075 / NRRL 31084 / PH-1) (Wheat head blight fungus) protein is Cofilin (COF1).